The chain runs to 87 residues: Small ribosomal subunit protein uS17 (87 aa).

The protein belongs to the universal ribosomal protein uS17 family. As to quaternary structure, part of the 30S ribosomal subunit.

One of the primary rRNA binding proteins, it binds specifically to the 5'-end of 16S ribosomal RNA. The sequence is that of Small ribosomal subunit protein uS17 from Cytophaga hutchinsonii (strain ATCC 33406 / DSM 1761 / CIP 103989 / NBRC 15051 / NCIMB 9469 / D465).